The primary structure comprises 261 residues: Ribonuclease HII (261 aa).

Positions 72–260 constitute an RNase H type-2 domain; the sequence is AVICGIDEVG…IKSIVLEKLD (189 aa). D78, E79, and D170 together coordinate a divalent metal cation.

This sequence belongs to the RNase HII family. Mn(2+) is required as a cofactor. Mg(2+) serves as cofactor.

The protein resides in the cytoplasm. The enzyme catalyses Endonucleolytic cleavage to 5'-phosphomonoester.. In terms of biological role, endonuclease that specifically degrades the RNA of RNA-DNA hybrids. The polypeptide is Ribonuclease HII (Staphylococcus carnosus (strain TM300)).